The chain runs to 272 residues: NAD kinase (272 aa).

The active-site Proton acceptor is Asp62. Residues 62 to 63 (DG), Arg67, 129 to 130 (NE), Arg140, Lys157, Asp159, 170 to 175 (SSYSSS), Ala194, and Gln229 each bind NAD(+).

This sequence belongs to the NAD kinase family. A divalent metal cation is required as a cofactor.

It localises to the cytoplasm. It catalyses the reaction NAD(+) + ATP = ADP + NADP(+) + H(+). Functionally, involved in the regulation of the intracellular balance of NAD and NADP, and is a key enzyme in the biosynthesis of NADP. Catalyzes specifically the phosphorylation on 2'-hydroxyl of the adenosine moiety of NAD to yield NADP. The protein is NAD kinase of Thermoplasma volcanium (strain ATCC 51530 / DSM 4299 / JCM 9571 / NBRC 15438 / GSS1).